A 159-amino-acid chain; its full sequence is Neuroglobin-1 (159 aa).

In terms of domain architecture, Globin spans 3 to 151 (KLTEKEKELI…VVAAMSRGWA (149 aa)). Residues histidine 66 and histidine 98 each coordinate heme b.

The protein belongs to the globin family. As to quaternary structure, monomer. Homodimers and homotetramers. Mainly monomeric but also detected as part of homodimers and homotetramers.

The protein localises to the cytoplasm. It localises to the cytosol. Its subcellular location is the mitochondrion matrix. The catalysed reaction is Fe(III)-heme b-[protein] + nitric oxide + H2O = Fe(II)-heme b-[protein] + nitrite + 2 H(+). Functionally, monomeric globin with a bis-histidyl six-coordinate heme-iron atom through which it can bind dioxygen, carbon monoxide and nitric oxide. Could help transport oxygen and increase its availability to the metabolically active neuronal tissues, though its low quantity in tissues as well as its high affinity for dioxygen, which may limit its oxygen-releasing ability, argue against it. The ferrous/deoxygenated form exhibits a nitrite reductase activity and it could produce nitric oxide which in turn inhibits cellular respiration in response to hypoxia. In its ferrous/deoxygenated state, it may also exhibit GDI (Guanine nucleotide Dissociation Inhibitor) activity toward heterotrimeric G-alpha proteins, thereby regulating signal transduction to facilitate neuroprotective responses in the wake of hypoxia and associated oxidative stress. The chain is Neuroglobin-1 (ngb1) from Oncorhynchus mykiss (Rainbow trout).